Here is a 348-residue protein sequence, read N- to C-terminus: Oxygen-dependent coproporphyrinogen-III oxidase (348 aa).

Serine 104 contributes to the substrate binding site. Histidine 108 and histidine 118 together coordinate a divalent metal cation. Histidine 118 (proton donor) is an active-site residue. A substrate-binding site is contributed by 120–122 (NYR). The a divalent metal cation site is built by histidine 152 and histidine 182. The interval 272–307 (YAEFNLVWDRGTIFGLQTNGRTESILMSLPPLARWE) is important for dimerization.

It belongs to the aerobic coproporphyrinogen-III oxidase family. Homodimer. It depends on a divalent metal cation as a cofactor.

The protein localises to the cytoplasm. It carries out the reaction coproporphyrinogen III + O2 + 2 H(+) = protoporphyrinogen IX + 2 CO2 + 2 H2O. It functions in the pathway porphyrin-containing compound metabolism; protoporphyrin-IX biosynthesis; protoporphyrinogen-IX from coproporphyrinogen-III (O2 route): step 1/1. Its function is as follows. Involved in the heme and chlorophyll biosynthesis. Catalyzes the aerobic oxidative decarboxylation of propionate groups of rings A and B of coproporphyrinogen-III to yield the vinyl groups in protoporphyrinogen-IX. In Prochlorococcus marinus (strain NATL1A), this protein is Oxygen-dependent coproporphyrinogen-III oxidase.